A 125-amino-acid polypeptide reads, in one-letter code: Glycine cleavage system H protein (125 aa).

Residues 19 to 101 (VAVVGISDYA…EGKGWFMKLK (83 aa)) enclose the Lipoyl-binding domain. Lys60 is subject to N6-lipoyllysine.

Belongs to the GcvH family. As to quaternary structure, the glycine cleavage system is composed of four proteins: P, T, L and H. It depends on (R)-lipoate as a cofactor.

The glycine cleavage system catalyzes the degradation of glycine. The H protein shuttles the methylamine group of glycine from the P protein to the T protein. The chain is Glycine cleavage system H protein from Xanthobacter autotrophicus (strain ATCC BAA-1158 / Py2).